A 247-amino-acid chain; its full sequence is MLIIPAIDLKDGACVRLRQGLMDDATVFSDDPVAMAAKWVQAGCRRLHLVDLNGAFEGQPVNGEVVTAIAKRYPDLPIQIGGGIRTLETIEHYVRAGVSYVIIGTKAVKEPEFVTEACRAFPGKVIVGLDAKDGFVATDGWAEVSSVQAVDLARRFEADGVSAIVYTDIAKDGMMQGCNVEATVALANASRIPVIASGGIHNIGDIQKLLDTNTPGIIGAITGRAIYEGTLDVAEAQALCDLKLKDE.

The active-site Proton acceptor is Asp-8. Asp-130 serves as the catalytic Proton donor.

This sequence belongs to the HisA/HisF family.

Its subcellular location is the cytoplasm. The enzyme catalyses 1-(5-phospho-beta-D-ribosyl)-5-[(5-phospho-beta-D-ribosylamino)methylideneamino]imidazole-4-carboxamide = 5-[(5-phospho-1-deoxy-D-ribulos-1-ylimino)methylamino]-1-(5-phospho-beta-D-ribosyl)imidazole-4-carboxamide. It functions in the pathway amino-acid biosynthesis; L-histidine biosynthesis; L-histidine from 5-phospho-alpha-D-ribose 1-diphosphate: step 4/9. The polypeptide is 1-(5-phosphoribosyl)-5-[(5-phosphoribosylamino)methylideneamino] imidazole-4-carboxamide isomerase (Stutzerimonas stutzeri (strain A1501) (Pseudomonas stutzeri)).